The primary structure comprises 358 residues: Forkhead box protein I1c (358 aa).

The segment covering 1-13 has biased composition (polar residues); the sequence is MNSIHLPSHQRTS. Disordered stretches follow at residues 1–25 and 191–255; these read MNSI…PKGA and DNGN…PSGI. The fork-head DNA-binding region spans 106 to 200; sequence RPPYSYSALI…DNGNFRRKRK (95 aa).

Its subcellular location is the nucleus. Probable transcription factor. The protein is Forkhead box protein I1c of Xenopus tropicalis (Western clawed frog).